A 246-amino-acid polypeptide reads, in one-letter code: Peroxisomal membrane protein 11A (246 aa).

Residues 1 to 93 (MDAFIRVANQ…LCLTLANLNR (93 aa)) are Cytoplasmic-facing. The helical transmembrane segment at 94–114 (VVYYICDTVLWAKSVGLTSGI) threads the bilayer. The Lumenal segment spans residues 115–217 (NREKWQMRAA…LNQLGIYKSN (103 aa)). The helical transmembrane segment at 218 to 238 (LGVVGFGGLVSSVAGLITVVY) threads the bilayer. Residues 218 to 238 (LGVVGFGGLVSSVAGLITVVY) are required for homodimerization, interaction with PEX11G, and peroxisomal localization. Topologically, residues 239–246 (PQLKLKAR) are cytoplasmic.

This sequence belongs to the peroxin-11 family. In terms of assembly, homodimer. Heterodimer with PEX11G. Probably interacts with COPB2 and COPA. Interacts with PEX19. Interacts with FIS1. In terms of tissue distribution, expressed at high levels in kidney, liver, lung, brain, and testis and at low levels in heart, spleen and skeletal muscle.

It localises to the peroxisome membrane. May be involved in peroxisomal proliferation and may regulate peroxisomes division. May mediate binding of coatomer proteins to the peroxisomal membrane. Promotes membrane protrusion and elongation on the peroxisomal surface. The chain is Peroxisomal membrane protein 11A (Pex11a) from Rattus norvegicus (Rat).